We begin with the raw amino-acid sequence, 252 residues long: Chitooligosaccharide deacetylase (252 aa).

Mg(2+)-binding residues include His61 and His125.

This sequence belongs to the YdjC deacetylase family. ChbG subfamily. In terms of assembly, homodimer. The cofactor is Mg(2+).

The protein localises to the cytoplasm. The catalysed reaction is N,N'-diacetylchitobiose + H2O = N-acetyl-beta-D-glucosaminyl-(1-&gt;4)-D-glucosamine + acetate. It catalyses the reaction diacetylchitobiose-6'-phosphate + H2O = N'-monoacetylchitobiose-6'-phosphate + acetate. Its pathway is glycan degradation; chitin degradation. In terms of biological role, involved in the degradation of chitin. ChbG is essential for growth on the acetylated chitooligosaccharides chitobiose and chitotriose but is dispensable for growth on cellobiose and chitosan dimer, the deacetylated form of chitobiose. Deacetylation of chitobiose-6-P and chitotriose-6-P is necessary for both the activation of the chb promoter by the regulatory protein ChbR and the hydrolysis of phosphorylated beta-glucosides by the phospho-beta-glucosidase ChbF. Catalyzes the removal of only one acetyl group from chitobiose-6-P to yield monoacetylchitobiose-6-P, the inducer of ChbR and the substrate of ChbF. The chain is Chitooligosaccharide deacetylase from Salmonella heidelberg (strain SL476).